The chain runs to 310 residues: tRNA-5-methyluridine(54) 2-sulfurtransferase (310 aa).

The Zn(2+) site is built by C3, C6, C22, and H25. ATP is bound by residues A53 and I79. 2 residues coordinate [4Fe-4S] cluster: C128 and C131. C128 and C220 are oxidised to a cystine. The ATP site is built by K135 and G154. C220 provides a ligand contact to [4Fe-4S] cluster. Residues C272, C275, C284, and C287 each contribute to the Zn(2+) site.

It belongs to the TtcA family. TtuA subfamily. Homodimer. It depends on [4Fe-4S] cluster as a cofactor. Mg(2+) is required as a cofactor.

The catalysed reaction is 5-methyluridine(54) in tRNA + hydrogen sulfide + ATP = 5-methyl-2-thiouridine(54) in tRNA + AMP + diphosphate. It participates in tRNA modification. In terms of biological role, catalyzes the ATP-dependent 2-thiolation of 5-methyluridine residue at position 54 in the T loop of tRNAs, leading to 5-methyl-2-thiouridine (m(5)s(2)U or s(2)T). This modification allows thermal stabilization of tRNAs in thermophilic microorganisms, and is required for cell growth at high temperatures. Can use free sulfide as sulfur source in vitro, which may be also the sulfur source in vivo. This Pyrococcus horikoshii (strain ATCC 700860 / DSM 12428 / JCM 9974 / NBRC 100139 / OT-3) protein is tRNA-5-methyluridine(54) 2-sulfurtransferase.